The chain runs to 348 residues: Inactive rhomboid-related protein 2 (348 aa).

An EF-hand domain is found at 14 to 49; the sequence is IEASSWIRIFRAFDTDHDGLIQCEEMQKTIRDSTYS. Ca(2+) is bound by residues aspartate 27, aspartate 29, aspartate 31, and glutamate 38. Transmembrane regions (helical) follow at residues 121-141, 177-197, 207-227, 229-249, 263-283, 290-310, and 323-343; these read PPIFLIFLSIVQLAFYLYYVV, LINVGIFHIIFNILIQLAIGV, IYILYFMGVLFGSILSLALDP, VFLCGGAAGSFSLIASHITTI, LPILIVFAALDYVLAVYQRFF, VSMYGHLGGLVAGILFTFILF, and FWVSLVLSGFFIAICITLIAA.

This sequence belongs to the peptidase S54 family.

The protein resides in the membrane. Probable inactive serine protease. This is Inactive rhomboid-related protein 2 from Caenorhabditis elegans.